A 297-amino-acid polypeptide reads, in one-letter code: Guanylate kinase (297 aa).

In terms of domain architecture, Guanylate kinase-like spans Gly-4–His-183. An ATP-binding site is contributed by Gly-11–Gly-18. The interval Glu-204–Phe-297 is unknown.

This sequence belongs to the guanylate kinase family.

The protein resides in the cytoplasm. The enzyme catalyses GMP + ATP = GDP + ADP. Its function is as follows. Essential for recycling GMP and indirectly, cGMP. This Mycoplasma mycoides subsp. mycoides SC (strain CCUG 32753 / NCTC 10114 / PG1) protein is Guanylate kinase (gmk).